Reading from the N-terminus, the 467-residue chain is Dimethylamine methyltransferase MtbB1 (467 aa).

Residue Pyl-356 is a non-standard amino acid, pyrrolysine.

It belongs to the dimethylamine methyltransferase family.

It catalyses the reaction Co(I)-[dimethylamine-specific corrinoid protein] + dimethylamine + H(+) = methyl-Co(III)-[dimethylamine-specific corrinoid protein] + methylamine. It participates in one-carbon metabolism; methanogenesis from dimethylamine. Its function is as follows. Catalyzes the transfer of a methyl group from dimethylamine to the corrinoid cofactor of MtbC. This chain is Dimethylamine methyltransferase MtbB1 (mtbB1), found in Methanosarcina barkeri (strain Fusaro / DSM 804).